A 21-amino-acid polypeptide reads, in one-letter code: Trypsin (21 aa).

Positions 1–7 are cleaved as a propeptide — activation peptide; the sequence is FPIEEDK. One can recognise a Peptidase S1 domain in the interval 8 to 21; it reads IVGGYECPKHXVPW.

Belongs to the peptidase S1 family.

The protein localises to the secreted. It is found in the extracellular space. The enzyme catalyses Preferential cleavage: Arg-|-Xaa, Lys-|-Xaa.. The polypeptide is Trypsin (Protopterus aethiopicus (Marbled lungfish)).